Consider the following 80-residue polypeptide: ATP synthase subunit c (80 aa).

The next 2 membrane-spanning stretches (helical) occupy residues 11–31 (IAATIMMGLAAIGAAIGIGIL) and 54–74 (FIVMGLVDAIPMITVGLGLYI).

Belongs to the ATPase C chain family. In terms of assembly, F-type ATPases have 2 components, F(1) - the catalytic core - and F(0) - the membrane proton channel. F(1) has five subunits: alpha(3), beta(3), gamma(1), delta(1), epsilon(1). F(0) has three main subunits: a(1), b(2) and c(10-14). The alpha and beta chains form an alternating ring which encloses part of the gamma chain. F(1) is attached to F(0) by a central stalk formed by the gamma and epsilon chains, while a peripheral stalk is formed by the delta and b chains.

Its subcellular location is the cell membrane. Functionally, f(1)F(0) ATP synthase produces ATP from ADP in the presence of a proton or sodium gradient. F-type ATPases consist of two structural domains, F(1) containing the extramembraneous catalytic core and F(0) containing the membrane proton channel, linked together by a central stalk and a peripheral stalk. During catalysis, ATP synthesis in the catalytic domain of F(1) is coupled via a rotary mechanism of the central stalk subunits to proton translocation. Its function is as follows. Key component of the F(0) channel; it plays a direct role in translocation across the membrane. A homomeric c-ring of between 10-14 subunits forms the central stalk rotor element with the F(1) delta and epsilon subunits. The polypeptide is ATP synthase subunit c (Baumannia cicadellinicola subsp. Homalodisca coagulata).